The sequence spans 377 residues: O-phospho-L-seryl-tRNA:Cys-tRNA synthase (377 aa).

Pyridoxal 5'-phosphate-binding positions include 83-84, Asn188, and 211-213; these read AR and SGH. Lys214 is modified (N6-(pyridoxal phosphate)lysine).

It belongs to the SepCysS family. As to quaternary structure, homodimer. Interacts with SepRS. Pyridoxal 5'-phosphate serves as cofactor.

It carries out the reaction O-phospho-L-seryl-tRNA(Cys) + hydrogen sulfide + H(+) = L-cysteinyl-tRNA(Cys) + phosphate. In terms of biological role, converts O-phospho-L-seryl-tRNA(Cys) (Sep-tRNA(Cys)) to L-cysteinyl-tRNA(Cys) (Cys-tRNA(Cys)). The polypeptide is O-phospho-L-seryl-tRNA:Cys-tRNA synthase (Methanothermobacter thermautotrophicus (strain ATCC 29096 / DSM 1053 / JCM 10044 / NBRC 100330 / Delta H) (Methanobacterium thermoautotrophicum)).